A 177-amino-acid polypeptide reads, in one-letter code: Large ribosomal subunit protein uL6 (177 aa).

The protein belongs to the universal ribosomal protein uL6 family. Part of the 50S ribosomal subunit.

Functionally, this protein binds to the 23S rRNA, and is important in its secondary structure. It is located near the subunit interface in the base of the L7/L12 stalk, and near the tRNA binding site of the peptidyltransferase center. The polypeptide is Large ribosomal subunit protein uL6 (Cellvibrio japonicus (strain Ueda107) (Pseudomonas fluorescens subsp. cellulosa)).